The sequence spans 482 residues: Islet cell autoantigen 1-like protein (482 aa).

The region spanning 44 to 247 (ASDAELDAKL…TARMMSQIHE (204 aa)) is the AH domain. 2 disordered regions span residues 365 to 393 (TQECQTAFGSPSASLTSQEPSMGSEPLAH) and 427 to 449 (SHTDNQPVPSQSPKKLTRSPNNG). Composition is skewed to polar residues over residues 366 to 385 (QECQTAFGSPSASLTSQEPS) and 428 to 449 (HTDNQPVPSQSPKKLTRSPNNG).

The chain is Islet cell autoantigen 1-like protein (ICA1L) from Homo sapiens (Human).